We begin with the raw amino-acid sequence, 187 residues long: GTP cyclohydrolase 1 (187 aa).

Zn(2+)-binding residues include Cys-78, His-81, and Cys-149.

This sequence belongs to the GTP cyclohydrolase I family. In terms of assembly, toroid-shaped homodecamer, composed of two pentamers of five dimers.

The catalysed reaction is GTP + H2O = 7,8-dihydroneopterin 3'-triphosphate + formate + H(+). It functions in the pathway cofactor biosynthesis; 7,8-dihydroneopterin triphosphate biosynthesis; 7,8-dihydroneopterin triphosphate from GTP: step 1/1. This chain is GTP cyclohydrolase 1, found in Wolinella succinogenes (strain ATCC 29543 / DSM 1740 / CCUG 13145 / JCM 31913 / LMG 7466 / NCTC 11488 / FDC 602W) (Vibrio succinogenes).